Reading from the N-terminus, the 108-residue chain is MSETFTEISPHQAWELIENEGATLADIRDGRRYAYSHPQDAFHLTNESYGRFLDEVDYEEPVIVICYHGVSSRNTAQFLVEQGFDRVYSVKGGFDGWERSGLPIETAY.

Residues 18-106 enclose the Rhodanese domain; the sequence is ENEGATLADI…WERSGLPIET (89 aa). Residue Cys-66 is the Cysteine persulfide intermediate of the active site.

This sequence belongs to the GlpE family.

The protein localises to the cytoplasm. The catalysed reaction is thiosulfate + hydrogen cyanide = thiocyanate + sulfite + 2 H(+). The enzyme catalyses thiosulfate + [thioredoxin]-dithiol = [thioredoxin]-disulfide + hydrogen sulfide + sulfite + 2 H(+). Its function is as follows. Transferase that catalyzes the transfer of sulfur from thiosulfate to thiophilic acceptors such as cyanide or dithiols. May function in a CysM-independent thiosulfate assimilation pathway by catalyzing the conversion of thiosulfate to sulfite, which can then be used for L-cysteine biosynthesis. This is Thiosulfate sulfurtransferase GlpE from Actinobacillus pleuropneumoniae serotype 3 (strain JL03).